We begin with the raw amino-acid sequence, 202 residues long: MNHLIIFAHPNSVRSFGRAIANRIEQISQENGVNVFFRDLYEMNFNPILSHEELQNANNGIIPEDIQQEHDFILQADLITLVYPLWWMGFPAILKGYLDRVLSHGFAYKTENGESVGLLKNKQMQQFITIGSNVDKYKEFGVDKSLNHCLINGLFNYCGIENVEFELFGDIHLIDDKARKAMIELAAQKTQAKLTALLKEKE.

Belongs to the NAD(P)H dehydrogenase (quinone) family.

This is an uncharacterized protein from Haemophilus influenzae (strain ATCC 51907 / DSM 11121 / KW20 / Rd).